Reading from the N-terminus, the 338-residue chain is Heat-inducible transcription repressor HrcA (338 aa).

The protein belongs to the HrcA family.

Functionally, negative regulator of class I heat shock genes (grpE-dnaK-dnaJ and groELS operons). Prevents heat-shock induction of these operons. The sequence is that of Heat-inducible transcription repressor HrcA from Thermotoga petrophila (strain ATCC BAA-488 / DSM 13995 / JCM 10881 / RKU-1).